The following is a 534-amino-acid chain: Multicopper oxidase LPR1 homolog 3 (534 aa).

Cu cation is bound by residues H84 and H86. Residue N109 is glycosylated (N-linked (GlcNAc...) asparagine). 2 residues coordinate Cu cation: H133 and H135. In terms of domain architecture, Plastocyanin-like spans 219–291; it reads PFQAVQRRRY…VDFSLVVNPN (73 aa). N-linked (GlcNAc...) asparagine glycosylation is found at N234, N291, N312, N323, N341, and N372. Cu cation is bound by residues H419, H422, and H424. Residue N450 is glycosylated (N-linked (GlcNAc...) asparagine). Positions 515, 516, 517, 521, and 526 each coordinate Cu cation.

The protein belongs to the multicopper oxidase family. It depends on Cu cation as a cofactor. In terms of tissue distribution, expressed in roots and basal stems.

The protein resides in the endoplasmic reticulum membrane. In terms of biological role, multicopper oxidase that may play a role in the maintenance of inorganic phosphate homeostasis. This chain is Multicopper oxidase LPR1 homolog 3, found in Oryza sativa subsp. japonica (Rice).